The following is a 421-amino-acid chain: Testin (421 aa).

Residues 92–199 (MILTNPVAAR…GDVKLPCELD (108 aa)) form the PET domain. Residues 134 to 164 (KQPVAGSEGAQYRKKQLAKQLPAHDQDPSKC) form a disordered region. Positions 155 to 164 (PAHDQDPSKC) are enriched in basic and acidic residues. LIM zinc-binding domains lie at 234–297 (YSCY…CDSE), 299–359 (PRCA…NHAV), and 362–421 (QGCH…KMMS).

Belongs to the prickle / espinas / testin family. Interacts via LIM domain 1 with ZYX. Interacts (via LIM domain 3) with ENAH and VASP. Interacts with ALKBH4, talin, actin, alpha-actinin, GRIP1 and PXN. Interacts (via LIM domain 2) with ACTL7A (via N-terminus). Heterodimer with ACTL7A; the heterodimer interacts with ENAH to form a heterotrimer.

It localises to the cytoplasm. Its subcellular location is the cell junction. It is found in the focal adhesion. Functionally, scaffold protein that may play a role in cell adhesion, cell spreading and in the reorganization of the actin cytoskeleton. Plays a role in the regulation of cell proliferation. May act as a tumor suppressor. The chain is Testin (TES) from Eulemur macaco macaco (Black lemur).